A 268-amino-acid chain; its full sequence is Glycine/sarcosine N-methyltransferase (268 aa).

S-adenosyl-L-methionine is bound by residues Tyr26, Trp34, Arg43, Ala67, Asp88, 114–115 (DW), and Leu132. 3 residues coordinate substrate: Asn134, Arg167, and Tyr206.

The protein belongs to the class I-like SAM-binding methyltransferase superfamily. Glycine N-methyltransferase family. In terms of assembly, monomer.

The catalysed reaction is glycine + 2 S-adenosyl-L-methionine = N,N-dimethylglycine + 2 S-adenosyl-L-homocysteine + 2 H(+). The enzyme catalyses glycine + S-adenosyl-L-methionine = sarcosine + S-adenosyl-L-homocysteine + H(+). It carries out the reaction sarcosine + S-adenosyl-L-methionine = N,N-dimethylglycine + S-adenosyl-L-homocysteine + H(+). It functions in the pathway amine and polyamine biosynthesis; betaine biosynthesis via glycine pathway; betaine from glycine: step 1/3. The protein operates within amine and polyamine biosynthesis; betaine biosynthesis via glycine pathway; betaine from glycine: step 2/3. With respect to regulation, p-chloromercuribenzoic acid inhibits more than 95% of the GSMT activities on glycine and sarcosine, and S-adenosylhomocysteine (AdoHcy) inhibits completely GSMT activities. Its function is as follows. Catalyzes the methylation of glycine and sarcosine to sarcosine and dimethylglycine, respectively, with S-adenosylmethionine (AdoMet) acting as the methyl donor. It has strict specificity for glycine and sarcosine as the methyl group acceptors. This chain is Glycine/sarcosine N-methyltransferase, found in Halorhodospira halochloris (Ectothiorhodospira halochloris).